The chain runs to 75 residues: 8.9 kDa basic protein (75 aa).

The polypeptide is 8.9 kDa basic protein (P8.9) (Orgyia pseudotsugata (Douglas-fir tussock moth)).